Consider the following 152-residue polypeptide: Probable flagellum biosynthesis repressor protein FlbT (152 aa).

The protein belongs to the FlbT family.

In terms of biological role, has a post-transcriptional repressor function in flagellum biogenesis. Associates with the 5'-UTR of fljK mRNA and promotes its degradation. In Brucella abortus (strain S19), this protein is Probable flagellum biosynthesis repressor protein FlbT.